We begin with the raw amino-acid sequence, 240 residues long: Large ribosomal subunit protein uL2 (240 aa).

The segment covering 1–11 (MGKRLISQNRG) has biased composition (polar residues). 2 disordered regions span residues 1–25 (MGKR…HKRK) and 207–240 (GGRH…TGKR). 2 stretches are compositionally biased toward basic residues: residues 13–25 (GTPK…HKRK) and 224–240 (SPGR…TGKR).

It belongs to the universal ribosomal protein uL2 family. In terms of assembly, part of the 50S ribosomal subunit. Forms a bridge to the 30S subunit in the 70S ribosome.

In terms of biological role, one of the primary rRNA binding proteins. Required for association of the 30S and 50S subunits to form the 70S ribosome, for tRNA binding and peptide bond formation. It has been suggested to have peptidyltransferase activity; this is somewhat controversial. Makes several contacts with the 16S rRNA in the 70S ribosome. This is Large ribosomal subunit protein uL2 from Methanococcus maripaludis (strain DSM 14266 / JCM 13030 / NBRC 101832 / S2 / LL).